The primary structure comprises 248 residues: Probable transcriptional regulatory protein PLES_43501 (248 aa).

Belongs to the TACO1 family.

Its subcellular location is the cytoplasm. This is Probable transcriptional regulatory protein PLES_43501 from Pseudomonas aeruginosa (strain LESB58).